A 143-amino-acid chain; its full sequence is Transcriptional regulator SlyA (143 aa).

One can recognise an HTH marR-type domain in the interval 2 to 135; sequence ESTLGSDLAR…LANLIERLEQ (134 aa). A DNA-binding region (H-T-H motif) is located at residues 49–72; sequence QIQLAKAIGIEQPSLVRTLDQLED.

This sequence belongs to the SlyA family. Homodimer.

In terms of biological role, transcription regulator that can specifically activate or repress expression of target genes. This chain is Transcriptional regulator SlyA, found in Edwardsiella ictaluri (strain 93-146).